The sequence spans 219 residues: GPI ethanolamine phosphate transferase, stabilizing subunit (219 aa).

Helical transmembrane passes span 11 to 31 (YTNL…SFFV), 42 to 62 (TWLC…YLVV), 86 to 106 (CFLM…APLI), 113 to 133 (FLFA…LLGP), 155 to 175 (LQIT…PIPL), and 189 to 209 (TLGA…WIYW).

It belongs to the PIGF family. Part of the ethanolamine phosphate transferase 3 complex composed by PIGO and PIGF. Part of the ethanolamine phosphate transferase 2 complex with PIGG. PIGF is required to stabilize PIGG and PIGO.

It localises to the endoplasmic reticulum membrane. Its pathway is glycolipid biosynthesis; glycosylphosphatidylinositol-anchor biosynthesis. Its function is as follows. Stabilizing subunit of the ethanolamine phosphate transferase 3 and ethanolamine phosphate transferase 2 complexes that sequentially transfer an ethanolamine phosphate (EtNP) from a phosphatidylethanolamine (PE) to the 6-OH position of the third alpha-1,2-linked mannose and the second alpha-1,6-linked mannose of the alpha-D-Man-(1-&gt;2)-alpha-D-Man-(1-&gt;6)-2-PEtn-alpha-D-Man-(1-&gt;4)-alpha-D-GlcN-(1-&gt;6)-(1-radyl,2-acyl-sn-glycero-3-phospho)-2-acyl-inositol (also termed H6) intermediate to generate a 6-PEtn-alpha-D-Man-(1-&gt;2)-6-PEtn-alpha-D-Man-(1-&gt;6)-2-PEtn-alpha-D-Man-(1-&gt;4)-alpha-D-GlcN-(1-&gt;6)-(1-radyl,2-acyl-sn-glycero-3-phospho)-2-acyl-inositol (also termed H8). Participates in the tenth and eleventh steps of the glycosylphosphatidylinositol-anchor biosynthesis, in association with PIGO and PIGG, respectively. The chain is GPI ethanolamine phosphate transferase, stabilizing subunit from Mus musculus (Mouse).